Reading from the N-terminus, the 226-residue chain is Imidazoleglycerol-phosphate dehydratase (226 aa).

A disordered region spans residues 23–55 (LTGGPIERPQPSLFASEKGANTAGPDDASQTTA).

The protein belongs to the imidazoleglycerol-phosphate dehydratase family.

It catalyses the reaction D-erythro-1-(imidazol-4-yl)glycerol 3-phosphate = 3-(imidazol-4-yl)-2-oxopropyl phosphate + H2O. Its pathway is amino-acid biosynthesis; L-histidine biosynthesis; L-histidine from 5-phospho-alpha-D-ribose 1-diphosphate: step 6/9. The protein is Imidazoleglycerol-phosphate dehydratase (HIS3) of Maudiozyma humilis (Sour dough yeast).